A 334-amino-acid chain; its full sequence is Ornithine carbamoyltransferase (334 aa).

Residues serine 57–threonine 60, arginine 108, and histidine 135–glutamine 138 each bind carbamoyl phosphate. L-ornithine-binding positions include asparagine 168, aspartate 232, and serine 236 to methionine 237. Residues cysteine 274–leucine 275 and arginine 321 contribute to the carbamoyl phosphate site.

Belongs to the aspartate/ornithine carbamoyltransferase superfamily. OTCase family.

The protein resides in the cytoplasm. The enzyme catalyses carbamoyl phosphate + L-ornithine = L-citrulline + phosphate + H(+). It participates in amino-acid biosynthesis; L-arginine biosynthesis; L-arginine from L-ornithine and carbamoyl phosphate: step 1/3. Functionally, reversibly catalyzes the transfer of the carbamoyl group from carbamoyl phosphate (CP) to the N(epsilon) atom of ornithine (ORN) to produce L-citrulline. This is Ornithine carbamoyltransferase from Cutibacterium acnes (strain DSM 16379 / KPA171202) (Propionibacterium acnes).